A 692-amino-acid polypeptide reads, in one-letter code: Potassium-transporting ATPase ATP-binding subunit (692 aa).

The next 4 membrane-spanning stretches (helical) occupy residues 50–70 (PIMFVVEIGFIITFILSFLPS), 77–97 (GWFNITVSLILLFTVLFANFA), 240–260 (LTLIFLIVVVTLPIFTNYLGF), and 266–286 (VLVALLVCLIPTTIGGLLSAI). The active-site 4-aspartylphosphate intermediate is the Asp319. ATP-binding positions include Asp356, Glu360, 388-395 (FKAETRMS), and Lys407. Positions 530 and 534 each coordinate Mg(2+). 3 helical membrane-spanning segments follow: residues 600 to 620 (FAIIPAMFTLAIPQMEALNIM), 628 to 648 (AILSALIFNAVIIPLLIPLAM), and 672 to 692 (GGVIVPFIGIKVIDIIVGLFI).

The protein belongs to the cation transport ATPase (P-type) (TC 3.A.3) family. Type IA subfamily. The system is composed of three essential subunits: KdpA, KdpB and KdpC.

It is found in the cell membrane. It carries out the reaction K(+)(out) + ATP + H2O = K(+)(in) + ADP + phosphate + H(+). Functionally, part of the high-affinity ATP-driven potassium transport (or Kdp) system, which catalyzes the hydrolysis of ATP coupled with the electrogenic transport of potassium into the cytoplasm. This subunit is responsible for energy coupling to the transport system and for the release of the potassium ions to the cytoplasm. In Bacillus cereus (strain 03BB102), this protein is Potassium-transporting ATPase ATP-binding subunit.